A 506-amino-acid polypeptide reads, in one-letter code: Probable Xaa-Pro aminopeptidase PAAG_05466 (506 aa).

The Mn(2+) site is built by aspartate 285, aspartate 296, glutamate 433, and glutamate 471.

The protein belongs to the peptidase M24B family. Mn(2+) is required as a cofactor.

It carries out the reaction Release of any N-terminal amino acid, including proline, that is linked to proline, even from a dipeptide or tripeptide.. Catalyzes the removal of a penultimate prolyl residue from the N-termini of peptides. The sequence is that of Probable Xaa-Pro aminopeptidase PAAG_05466 from Paracoccidioides lutzii (strain ATCC MYA-826 / Pb01) (Paracoccidioides brasiliensis).